The following is a 33-amino-acid chain: uncharacterized protein (33 aa).

This is an uncharacterized protein from Staphylococcus aureus (strain N315).